A 150-amino-acid chain; its full sequence is Ribonuclease K6 (150 aa).

Positions 1–23 (MVLCFPLLLLLLVLWGPVCPLHA) are cleaved as a signal peptide. His-38 serves as the catalytic Proton acceptor. Intrachain disulfides connect Cys-46-Cys-104, Cys-60-Cys-114, Cys-78-Cys-129, and Cys-85-Cys-92. Asn-55 carries N-linked (GlcNAc...) asparagine glycosylation. Residues 61 to 65 (KHQNT) and Lys-86 each bind substrate. Residue Asn-100 is glycosylated (N-linked (GlcNAc...) asparagine). Arg-105 contacts substrate. His-145 serves as the catalytic Proton donor.

The protein belongs to the pancreatic ribonuclease family. In terms of assembly, interacts (via N-terminus) with bacterial lipopolysaccharide (LPS).

The protein resides in the secreted. It is found in the lysosome. It localises to the cytoplasmic granule. Its function is as follows. Ribonuclease which shows a preference for the pyrimidines uridine and cytosine. Has potent antibacterial activity against a range of Gram-positive and Gram-negative bacteria, including P.aeruginosa, A.baumanii, M.luteus, S.aureus, E.faecalis, E.faecium, S.saprophyticus and E.coli. Causes loss of bacterial membrane integrity, and also promotes agglutination of Gram-negative bacteria. Probably contributes to urinary tract sterility. Bactericidal activity is independent of RNase activity. The protein is Ribonuclease K6 (RNASE6) of Gorilla gorilla gorilla (Western lowland gorilla).